The primary structure comprises 83 residues: MAGKGVGSRLSTLFLLVLLVITIGMMQVQVAEGRMCKTPSGKFKGYCVNNTNCKNVCRTEGFPTGSCDFHVAGRKCYCYKPCP.

Positions 1–33 (MAGKGVGSRLSTLFLLVLLVITIGMMQVQVAEG) are cleaved as a signal peptide. Disulfide bonds link cysteine 36–cysteine 82, cysteine 47–cysteine 67, cysteine 53–cysteine 76, and cysteine 57–cysteine 78.

Belongs to the DEFL family.

The protein localises to the secreted. Functionally, plant defense peptide. Has antifungal activity against B.cinera, F.oxysporum, F.solani and H.annosum with IC(50) values of 0.4 ug/ml, 2.9 ug/ml, 0.9 ug/ml and 1.4 ug/ml, respectively. Has modest antifungal activity against C.albicans and T.reesei. Causes thickening of F.oxysporum hyphae and an increase in their branching. Lacks antibacterial activity against the Gram-negative bacteria E.coli and E.carotovora. The polypeptide is Defensin-1 (Pinus sylvestris (Scotch pine)).